We begin with the raw amino-acid sequence, 539 residues long: Probable glycerol kinase (539 aa).

Residue threonine 12 coordinates substrate. Residue arginine 16 participates in ATP binding. Substrate is bound by residues arginine 86, tyrosine 168, and aspartate 285. Residues threonine 307, glycine 352, and 453-457 contribute to the ATP site; that span reads GMAKN.

Belongs to the FGGY kinase family.

The enzyme catalyses glycerol + ATP = sn-glycerol 3-phosphate + ADP + H(+). It functions in the pathway polyol metabolism; glycerol degradation via glycerol kinase pathway; sn-glycerol 3-phosphate from glycerol: step 1/1. The protein is Probable glycerol kinase (gk) of Dictyostelium discoideum (Social amoeba).